The sequence spans 433 residues: Ribonuclease T2-like (433 aa).

4 cysteine pairs are disulfide-bonded: Cys-28-Cys-47, Cys-36-Cys-95, Cys-46-Cys-171, and Cys-103-Cys-163. N-linked (GlcNAc...) asparagine glycans are attached at residues Asn-38 and Asn-71. Active-site residues include His-88, Glu-156, and His-160. Asn-221 and Asn-263 each carry an N-linked (GlcNAc...) asparagine glycan. Cysteines 247 and 283 form a disulfide.

This sequence belongs to the RNase T2 family.

The protein localises to the vacuole lumen. It is found in the cytoplasm. The catalysed reaction is a ribonucleotidyl-ribonucleotide-RNA + H2O = a 3'-end 3'-phospho-ribonucleotide-RNA + a 5'-end dephospho-ribonucleoside-RNA + H(+). Its function is as follows. Rnase which modulates cell survival under stress conditions. Released from the vacuole to the cytoplasm during stress to promote tRNA and rRNA cleavage and to activate separately a downstream pathway that promotes cell death. Involved in cell size, vacuolar morphology and growth at high temperatures and high salt concentration. The polypeptide is Ribonuclease T2-like (RNY1) (Candida glabrata (strain ATCC 2001 / BCRC 20586 / JCM 3761 / NBRC 0622 / NRRL Y-65 / CBS 138) (Yeast)).